Here is a 319-residue protein sequence, read N- to C-terminus: Nucleotide-binding protein Mvan_2698 (319 aa).

Residues 1-12 (MTEQGMHQELRE) show a composition bias toward basic and acidic residues. The segment at 1 to 26 (MTEQGMHQELREGAGTAGDEGGLEAA) is disordered. 43–50 (GLSGAGRG) provides a ligand contact to ATP. 94–97 (DVRS) contacts GTP.

The protein belongs to the RapZ-like family.

Functionally, displays ATPase and GTPase activities. The chain is Nucleotide-binding protein Mvan_2698 from Mycolicibacterium vanbaalenii (strain DSM 7251 / JCM 13017 / BCRC 16820 / KCTC 9966 / NRRL B-24157 / PYR-1) (Mycobacterium vanbaalenii).